The primary structure comprises 356 residues: tRNA N6-adenosine threonylcarbamoyltransferase (356 aa).

Positions 131 and 135 each coordinate Fe cation. Residues 154 to 158, Asp-187, Gly-200, and Asn-289 contribute to the substrate site; that span reads LVSGG. Asp-317 is a Fe cation binding site.

This sequence belongs to the KAE1 / TsaD family. The cofactor is Fe(2+).

It localises to the cytoplasm. It catalyses the reaction L-threonylcarbamoyladenylate + adenosine(37) in tRNA = N(6)-L-threonylcarbamoyladenosine(37) in tRNA + AMP + H(+). In terms of biological role, required for the formation of a threonylcarbamoyl group on adenosine at position 37 (t(6)A37) in tRNAs that read codons beginning with adenine. Is involved in the transfer of the threonylcarbamoyl moiety of threonylcarbamoyl-AMP (TC-AMP) to the N6 group of A37, together with TsaE and TsaB. TsaD likely plays a direct catalytic role in this reaction. The chain is tRNA N6-adenosine threonylcarbamoyltransferase from Ruthia magnifica subsp. Calyptogena magnifica.